Reading from the N-terminus, the 147-residue chain is 3-hydroxyacyl-[acyl-carrier-protein] dehydratase FabZ (147 aa).

Residue H49 is part of the active site.

Belongs to the thioester dehydratase family. FabZ subfamily.

It localises to the cytoplasm. The enzyme catalyses a (3R)-hydroxyacyl-[ACP] = a (2E)-enoyl-[ACP] + H2O. Its function is as follows. Involved in unsaturated fatty acids biosynthesis. Catalyzes the dehydration of short chain beta-hydroxyacyl-ACPs and long chain saturated and unsaturated beta-hydroxyacyl-ACPs. In Alkaliphilus metalliredigens (strain QYMF), this protein is 3-hydroxyacyl-[acyl-carrier-protein] dehydratase FabZ.